Reading from the N-terminus, the 316-residue chain is N-acetyl-gamma-glutamyl-phosphate reductase (316 aa).

Residue Cys-136 is part of the active site.

It belongs to the NAGSA dehydrogenase family. Type 1 subfamily.

It localises to the cytoplasm. It carries out the reaction N-acetyl-L-glutamate 5-semialdehyde + phosphate + NADP(+) = N-acetyl-L-glutamyl 5-phosphate + NADPH + H(+). Its pathway is amino-acid biosynthesis; L-arginine biosynthesis; N(2)-acetyl-L-ornithine from L-glutamate: step 3/4. Functionally, catalyzes the NADPH-dependent reduction of N-acetyl-5-glutamyl phosphate to yield N-acetyl-L-glutamate 5-semialdehyde. The chain is N-acetyl-gamma-glutamyl-phosphate reductase from Xanthomonas oryzae pv. oryzae (strain MAFF 311018).